The chain runs to 473 residues: Photosystem II CP43 reaction center protein (473 aa).

A propeptide spanning residues Met1–Glu14 is cleaved from the precursor. At Thr15 the chain carries N-acetylthreonine. At Thr15 the chain carries Phosphothreonine. The next 5 helical transmembrane spans lie at Leu69–Ala93, Leu134–Asn155, Lys178–Thr200, Lys255–Ser275, and Trp291–Ala312. Residue Glu367 coordinates [CaMn4O5] cluster. A helical membrane pass occupies residues Arg447–Pro471.

The protein belongs to the PsbB/PsbC family. PsbC subfamily. As to quaternary structure, PSII is composed of 1 copy each of membrane proteins PsbA, PsbB, PsbC, PsbD, PsbE, PsbF, PsbH, PsbI, PsbJ, PsbK, PsbL, PsbM, PsbT, PsbX, PsbY, PsbZ, Psb30/Ycf12, at least 3 peripheral proteins of the oxygen-evolving complex and a large number of cofactors. It forms dimeric complexes. The cofactor is Binds multiple chlorophylls and provides some of the ligands for the Ca-4Mn-5O cluster of the oxygen-evolving complex. It may also provide a ligand for a Cl- that is required for oxygen evolution. PSII binds additional chlorophylls, carotenoids and specific lipids..

Its subcellular location is the plastid. It is found in the chloroplast thylakoid membrane. One of the components of the core complex of photosystem II (PSII). It binds chlorophyll and helps catalyze the primary light-induced photochemical processes of PSII. PSII is a light-driven water:plastoquinone oxidoreductase, using light energy to abstract electrons from H(2)O, generating O(2) and a proton gradient subsequently used for ATP formation. The protein is Photosystem II CP43 reaction center protein of Arabis hirsuta (Hairy rock-cress).